We begin with the raw amino-acid sequence, 177 residues long: MTDSANPTPSARPPRQPRTGTTGTGARKAGSKSGRSRAREFALQALYQHLVGGNDATAIDVFTRDLSGFHKADAAHYDALLHGCITTAQYMDELIAPQLDRKMSEISPIEHAVMWIGVYEFQHCQDVPWRVVINECIELAKEFGGTDGHKYVNGVLNGLAPQLRATEVAADKAAARG.

Residues 1-35 (MTDSANPTPSARPPRQPRTGTTGTGARKAGSKSGR) form a disordered region. Low complexity predominate over residues 17–28 (PRTGTTGTGARK).

The protein belongs to the NusB family.

In terms of biological role, involved in transcription antitermination. Required for transcription of ribosomal RNA (rRNA) genes. Binds specifically to the boxA antiterminator sequence of the ribosomal RNA (rrn) operons. The chain is Transcription antitermination protein NusB from Acidovorax ebreus (strain TPSY) (Diaphorobacter sp. (strain TPSY)).